Consider the following 138-residue polypeptide: Large ribosomal subunit protein uL16 (138 aa).

Over residues 1–19 (MLIPRRVKHRKQHHPKRSG) the composition is skewed to basic residues. The interval 1–24 (MLIPRRVKHRKQHHPKRSGAAKGG) is disordered.

The protein belongs to the universal ribosomal protein uL16 family. As to quaternary structure, part of the 50S ribosomal subunit.

Its function is as follows. Binds 23S rRNA and is also seen to make contacts with the A and possibly P site tRNAs. In Micrococcus luteus (strain ATCC 4698 / DSM 20030 / JCM 1464 / CCM 169 / CCUG 5858 / IAM 1056 / NBRC 3333 / NCIMB 9278 / NCTC 2665 / VKM Ac-2230) (Micrococcus lysodeikticus), this protein is Large ribosomal subunit protein uL16.